The chain runs to 337 residues: Anthranilate phosphoribosyltransferase (337 aa).

5-phospho-alpha-D-ribose 1-diphosphate contacts are provided by residues glycine 78, 81–82 (GD), threonine 86, 88–91 (NIST), 106–114 (KHGNRSVSS), and serine 118. Anthranilate is bound at residue glycine 78. Serine 90 serves as a coordination point for Mg(2+). Asparagine 109 serves as a coordination point for anthranilate. Arginine 164 contributes to the anthranilate binding site. Mg(2+)-binding residues include aspartate 222 and glutamate 223.

This sequence belongs to the anthranilate phosphoribosyltransferase family. As to quaternary structure, homodimer. Mg(2+) serves as cofactor.

It catalyses the reaction N-(5-phospho-beta-D-ribosyl)anthranilate + diphosphate = 5-phospho-alpha-D-ribose 1-diphosphate + anthranilate. It participates in amino-acid biosynthesis; L-tryptophan biosynthesis; L-tryptophan from chorismate: step 2/5. Functionally, catalyzes the transfer of the phosphoribosyl group of 5-phosphorylribose-1-pyrophosphate (PRPP) to anthranilate to yield N-(5'-phosphoribosyl)-anthranilate (PRA). This chain is Anthranilate phosphoribosyltransferase, found in Idiomarina loihiensis (strain ATCC BAA-735 / DSM 15497 / L2-TR).